A 395-amino-acid polypeptide reads, in one-letter code: MANDYFFTSESVSEGHPDKVADQISDAILDAILEQDKYSRVAAETLCNTGLVVLAGEITTTANIDYIQIARDTIKRIGYDNTDYGIDYKGCAVLVAYDKQSPDIAQGVDRAHDDNLDQGAGDQGLMFGYACDETPELMPLPIYLSHRLVERQASLRRDGRLPWLRPDAKSQVTIRYVDGKPDSIDTVVLSTQHAPDIELPALREAVIEEIIKPTLPADLIKGDIKFLVNPTGRFVIGGPQGDCGLTGRKIIVDTYGGAAPHGGGAFSGKDPSKVDRSAAYAGRYVAKNIVAAGLASRALIQVSYAIGVAEPTSVMVNTFGTGRVSDAVITKLVREHFDLRPKGIIKMLDLLRPIYEKTAAYGHFGREEPEFSWEATDKALALAEAAGVEPTARVA.

An ATP-binding site is contributed by His-16. Residue Asp-18 participates in Mg(2+) binding. Glu-44 provides a ligand contact to K(+). L-methionine-binding residues include Glu-57 and Gln-100. Residues 100–110 form a flexible loop region; that stretch reads QSPDIAQGVDR. Residues 167 to 169, 233 to 234, Asp-242, 248 to 249, Ala-265, and Lys-269 each bind ATP; these read DAK, RF, and RK. Asp-242 provides a ligand contact to L-methionine. Lys-273 provides a ligand contact to L-methionine.

It belongs to the AdoMet synthase family. As to quaternary structure, homotetramer; dimer of dimers. Mg(2+) is required as a cofactor. It depends on K(+) as a cofactor.

It localises to the cytoplasm. The enzyme catalyses L-methionine + ATP + H2O = S-adenosyl-L-methionine + phosphate + diphosphate. It participates in amino-acid biosynthesis; S-adenosyl-L-methionine biosynthesis; S-adenosyl-L-methionine from L-methionine: step 1/1. Functionally, catalyzes the formation of S-adenosylmethionine (AdoMet) from methionine and ATP. The overall synthetic reaction is composed of two sequential steps, AdoMet formation and the subsequent tripolyphosphate hydrolysis which occurs prior to release of AdoMet from the enzyme. The chain is S-adenosylmethionine synthase from Burkholderia vietnamiensis (strain G4 / LMG 22486) (Burkholderia cepacia (strain R1808)).